The primary structure comprises 70 residues: Fumarase D (70 aa).

This sequence belongs to the FumD family.

The catalysed reaction is (S)-malate = fumarate + H2O. In vitro catalyzes the addition of water to fumarate, forming malate. Cannot catalyze the reverse reaction. Cannot use the cis-isomer maleate as substrate. The sequence is that of Fumarase D from Salmonella typhi.